The chain runs to 317 residues: Orange carotenoid-binding protein (317 aa).

In terms of domain architecture, OCP N-terminal spans 18 to 169; the sequence is ADVVPATIAR…DMGFTAGKDG (152 aa). Echinenone-binding positions include 34 to 38, 37 to 44, 80 to 83, 107 to 117, 125 to 129, 151 to 161, Tyr201, 245 to 250, 273 to 284, and Trp288; these read EDQLA, LALIWFAY, TQAM, LGFWYRLGELM, IPAGY, ITVLRNAVVDM, CQNLKL, and VQTPWFGGNVGM.

It belongs to the orange carotenoid-binding protein family. In terms of assembly, monomer. Interacts with the APC core of the phycobilisome (PB), probably at a ratio of 1:1 in a light-independent manner; possibly only OCP-R binds to PBs. Interacts with FRP. Detachment from PBs is accelerated by FPR. Requires 3'-hydroxyechinenone as cofactor. Proteolytically cleaved into a red 16.7 kDa form named red carotenoid-binding protein (RCP) which lacks 15 residues from the N-terminus and approximately 150 residues from the C-terminus.

It is found in the cellular thylakoid membrane. In terms of biological role, acts as a blue-light photoreceptor and photo-protectant. Essential for inhibiting damaged induced by excess blue-green light via a process known as non-photochemical quenching (NPQ). In the dark or dim light the stable inactive form (OCP-O) is orange, upon illumination with blue-green light it converts to a metastable active red form (OCP-R), inducing energy dissipation, quenching cellular fluorescence via NPQ. One OCP-R molecule is sufficient to quench 1 phycobilisome. More OCP-R accumulates under high-light and low temperature; in the dark OCP-R spontaneously reverts to OCP-O. Reversion of OCP-O is accelerated by FRP. A kinetic study suggests conversion of OCP-O to OCP-R is limited by cis-trans proline isomerization of either Gln224-Pro225 or Pro225-Pro226. This Synechocystis sp. (strain ATCC 27184 / PCC 6803 / Kazusa) protein is Orange carotenoid-binding protein.